We begin with the raw amino-acid sequence, 543 residues long: CTP synthase (543 aa).

The segment at 1–265 (MTRFVFITGG…DQEVLRYFDL (265 aa)) is amidoligase domain. CTP is bound at residue S13. S13 is a UTP binding site. 14 to 19 (SLGKGI) is a binding site for ATP. Residue Y54 coordinates L-glutamine. D71 is a binding site for ATP. D71 and E139 together coordinate Mg(2+). CTP is bound by residues 146–148 (DIE), 186–191 (KTKPTQ), and K222. UTP-binding positions include 186-191 (KTKPTQ) and K222. The Glutamine amidotransferase type-1 domain maps to 291–542 (RVAIVGKYTA…IAAAVKEAHR (252 aa)). Residue G354 participates in L-glutamine binding. The Nucleophile; for glutamine hydrolysis role is filled by C381. L-glutamine-binding positions include 382 to 385 (FGMQ), E405, and R470. Active-site residues include H515 and E517.

The protein belongs to the CTP synthase family. In terms of assembly, homotetramer.

It carries out the reaction UTP + L-glutamine + ATP + H2O = CTP + L-glutamate + ADP + phosphate + 2 H(+). The catalysed reaction is L-glutamine + H2O = L-glutamate + NH4(+). It catalyses the reaction UTP + NH4(+) + ATP = CTP + ADP + phosphate + 2 H(+). Its pathway is pyrimidine metabolism; CTP biosynthesis via de novo pathway; CTP from UDP: step 2/2. Allosterically activated by GTP, when glutamine is the substrate; GTP has no effect on the reaction when ammonia is the substrate. The allosteric effector GTP functions by stabilizing the protein conformation that binds the tetrahedral intermediate(s) formed during glutamine hydrolysis. Inhibited by the product CTP, via allosteric rather than competitive inhibition. Its function is as follows. Catalyzes the ATP-dependent amination of UTP to CTP with either L-glutamine or ammonia as the source of nitrogen. Regulates intracellular CTP levels through interactions with the four ribonucleotide triphosphates. This Gluconobacter oxydans (strain 621H) (Gluconobacter suboxydans) protein is CTP synthase.